A 180-amino-acid polypeptide reads, in one-letter code: Protein sll1483 (180 aa).

Positions 1-26 are cleaved as a signal peptide; the sequence is MKTAARIVAFTALTGFALGMPTVAMA. The region spanning 45–176 is the FAS1 domain; that stretch reads AMTIVEVAAG…GVIHVIDQVI (132 aa).

In Synechocystis sp. (strain ATCC 27184 / PCC 6803 / Kazusa), this protein is Protein sll1483.